The following is a 385-amino-acid chain: UDP-N-acetylglucosamine--N-acetylmuramyl-(pentapeptide) pyrophosphoryl-undecaprenol N-acetylglucosamine transferase (385 aa).

UDP-N-acetyl-alpha-D-glucosamine is bound by residues 11–13, Asn-117, Arg-160, Ser-215, and Gln-317; that span reads TGG.

It belongs to the glycosyltransferase 28 family. MurG subfamily.

It localises to the cell inner membrane. It catalyses the reaction di-trans,octa-cis-undecaprenyl diphospho-N-acetyl-alpha-D-muramoyl-L-alanyl-D-glutamyl-meso-2,6-diaminopimeloyl-D-alanyl-D-alanine + UDP-N-acetyl-alpha-D-glucosamine = di-trans,octa-cis-undecaprenyl diphospho-[N-acetyl-alpha-D-glucosaminyl-(1-&gt;4)]-N-acetyl-alpha-D-muramoyl-L-alanyl-D-glutamyl-meso-2,6-diaminopimeloyl-D-alanyl-D-alanine + UDP + H(+). It functions in the pathway cell wall biogenesis; peptidoglycan biosynthesis. In terms of biological role, cell wall formation. Catalyzes the transfer of a GlcNAc subunit on undecaprenyl-pyrophosphoryl-MurNAc-pentapeptide (lipid intermediate I) to form undecaprenyl-pyrophosphoryl-MurNAc-(pentapeptide)GlcNAc (lipid intermediate II). The sequence is that of UDP-N-acetylglucosamine--N-acetylmuramyl-(pentapeptide) pyrophosphoryl-undecaprenol N-acetylglucosamine transferase from Rickettsia prowazekii (strain Madrid E).